We begin with the raw amino-acid sequence, 640 residues long: Probable threonine--tRNA ligase, cytoplasmic (640 aa).

The region spanning M1 to T63 is the TGS domain.

This sequence belongs to the class-II aminoacyl-tRNA synthetase family.

Its subcellular location is the cytoplasm. It catalyses the reaction tRNA(Thr) + L-threonine + ATP = L-threonyl-tRNA(Thr) + AMP + diphosphate + H(+). In Encephalitozoon cuniculi (strain GB-M1) (Microsporidian parasite), this protein is Probable threonine--tRNA ligase, cytoplasmic.